We begin with the raw amino-acid sequence, 333 residues long: Testin-2 (333 aa).

An N-terminal signal peptide occupies residues 1–17; it reads MIAVLFLAILCLEIDST. Cystine bridges form between Cys135/Cys178, Cys169/Cys211, and Cys269/Cys322. Residue Asn173 is glycosylated (N-linked (GlcNAc...) asparagine). Active-site residues include His276 and Asn300.

This sequence belongs to the peptidase C1 family. Expressed in testis and ovary. Low level in spleen, epididymis, kidney, and uterus. Expressed in primary cultures of Sertoli cells.

It is found in the secreted. In Mus musculus (Mouse), this protein is Testin-2.